Consider the following 703-residue polypeptide: Histone-lysine N-methyltransferase SETDB2 (703 aa).

The region spanning 178–248 is the MBD domain; it reads FTKGNPLQLP…DNFSFNNHVR (71 aa). In terms of domain architecture, Pre-SET spans 310 to 384; the sequence is KCCNCTDGCL…LCQNRVVQHG (75 aa). Zn(2+) is bound by residues Cys-312, Cys-314, Cys-318, Cys-324, Cys-326, Cys-365, Cys-369, Cys-371, and Cys-376. The 292-residue stretch at 387–678 folds into the SET domain; sequence LRLQVFKTNT…AGTELTWDYS (292 aa). S-adenosyl-L-methionine is bound at residue 397 to 399; that stretch reads KGW. The disordered stretch occupies residues 492–588; it reads TFSPRQARSG…SSSVISGGHP (97 aa). The segment covering 511–525 has biased composition (basic residues); that stretch reads RRPKTKTSMLQKRRR. Polar residues predominate over residues 550-560; sequence PEQKSSAGTKI. Residues 571-586 show a composition bias toward low complexity; that stretch reads SGYVSEESSSSVISGG. Residues Arg-632 and 635–636 contribute to the S-adenosyl-L-methionine site; that span reads NH. Cys-638, Cys-691, Cys-693, and Cys-698 together coordinate Zn(2+).

This sequence belongs to the class V-like SAM-binding methyltransferase superfamily.

Its subcellular location is the nucleus. The protein localises to the chromosome. It catalyses the reaction N(6),N(6)-dimethyl-L-lysyl(9)-[histone H3] + S-adenosyl-L-methionine = N(6),N(6),N(6)-trimethyl-L-lysyl(9)-[histone H3] + S-adenosyl-L-homocysteine + H(+). Its function is as follows. Histone methyltransferase involved in left-right axis specification in early development and mitosis. Specifically trimethylates 'Lys-9' of histone H3 (H3K9me3). H3K9me3 is a specific tag for epigenetic transcriptional repression that recruits HP1 (CBX1, CBX3 and/or CBX5) proteins to methylated histones. Contributes to H3K9me3 in both the interspersed repetitive elements and centromere-associated repeats. Plays a role in chromosome condensation and segregation during mitosis. The polypeptide is Histone-lysine N-methyltransferase SETDB2 (setdb2) (Xenopus laevis (African clawed frog)).